Consider the following 506-residue polypeptide: Kynurenine 3-monooxygenase (506 aa).

The disordered stretch occupies residues 153-174 (QETSLLPGEESEKDKKQNTEDE). Residues 162-171 (ESEKDKKQNT) are compositionally biased toward basic and acidic residues.

Belongs to the aromatic-ring hydroxylase family. KMO subfamily. FAD serves as cofactor.

It localises to the mitochondrion outer membrane. It catalyses the reaction L-kynurenine + NADPH + O2 + H(+) = 3-hydroxy-L-kynurenine + NADP(+) + H2O. It functions in the pathway cofactor biosynthesis; NAD(+) biosynthesis; quinolinate from L-kynurenine: step 1/3. Its function is as follows. Catalyzes the hydroxylation of L-kynurenine (L-Kyn) to form 3-hydroxy-L-kynurenine (L-3OHKyn). Required for synthesis of quinolinic acid. In Cryptococcus neoformans var. neoformans serotype D (strain JEC21 / ATCC MYA-565) (Filobasidiella neoformans), this protein is Kynurenine 3-monooxygenase.